Reading from the N-terminus, the 552-residue chain is Amino-acid acetyltransferase, mitochondrial (552 aa).

A mitochondrion-targeting transit peptide spans 1 to 32; it reads MIKTWIRCLTTEVRYHQPNAHGRSLVMSVLNS. In terms of domain architecture, N-acetyltransferase spans 379–545; it reads QTGKSDPVSK…LRDYAKYVRD (167 aa).

This sequence belongs to the acetyltransferase family.

Its subcellular location is the mitochondrion. It catalyses the reaction L-glutamate + acetyl-CoA = N-acetyl-L-glutamate + CoA + H(+). It functions in the pathway amino-acid biosynthesis; L-arginine biosynthesis; N(2)-acetyl-L-ornithine from L-glutamate: step 1/4. N-acetylglutamate synthase involved in arginine biosynthesis. The protein is Amino-acid acetyltransferase, mitochondrial (ARG2) of Kluyveromyces lactis (strain ATCC 8585 / CBS 2359 / DSM 70799 / NBRC 1267 / NRRL Y-1140 / WM37) (Yeast).